We begin with the raw amino-acid sequence, 311 residues long: GTP cyclohydrolase FolE2 (311 aa).

Belongs to the GTP cyclohydrolase IV family.

The catalysed reaction is GTP + H2O = 7,8-dihydroneopterin 3'-triphosphate + formate + H(+). It functions in the pathway cofactor biosynthesis; 7,8-dihydroneopterin triphosphate biosynthesis; 7,8-dihydroneopterin triphosphate from GTP: step 1/1. In terms of biological role, converts GTP to 7,8-dihydroneopterin triphosphate. This chain is GTP cyclohydrolase FolE2, found in Hydrogenovibrio crunogenus (strain DSM 25203 / XCL-2) (Thiomicrospira crunogena).